The following is a 476-amino-acid chain: Ribulose bisphosphate carboxylase large chain (476 aa).

Positions 1–2 are excised as a propeptide; sequence MS. N-acetylproline is present on proline 3. The residue at position 14 (lysine 14) is an N6,N6,N6-trimethyllysine. Asparagine 123 and threonine 173 together coordinate substrate. The active-site Proton acceptor is lysine 175. Lysine 177 is a binding site for substrate. Positions 201, 203, and 204 each coordinate Mg(2+). Residue lysine 201 is modified to N6-carboxylysine. The active-site Proton acceptor is histidine 294. Substrate contacts are provided by arginine 295, histidine 327, and serine 379.

The protein belongs to the RuBisCO large chain family. Type I subfamily. In terms of assembly, heterohexadecamer of 8 large chains and 8 small chains; disulfide-linked. The disulfide link is formed within the large subunit homodimers. Mg(2+) serves as cofactor. In terms of processing, the disulfide bond which can form in the large chain dimeric partners within the hexadecamer appears to be associated with oxidative stress and protein turnover.

It localises to the plastid. It is found in the chloroplast. The enzyme catalyses 2 (2R)-3-phosphoglycerate + 2 H(+) = D-ribulose 1,5-bisphosphate + CO2 + H2O. The catalysed reaction is D-ribulose 1,5-bisphosphate + O2 = 2-phosphoglycolate + (2R)-3-phosphoglycerate + 2 H(+). In terms of biological role, ruBisCO catalyzes two reactions: the carboxylation of D-ribulose 1,5-bisphosphate, the primary event in carbon dioxide fixation, as well as the oxidative fragmentation of the pentose substrate in the photorespiration process. Both reactions occur simultaneously and in competition at the same active site. The protein is Ribulose bisphosphate carboxylase large chain of Brachypodium distachyon (Purple false brome).